Consider the following 624-residue polypeptide: Probable potassium transport system protein Kup 2 (624 aa).

12 helical membrane-spanning segments follow: residues leucine 14–phenylalanine 34, isoleucine 51–valine 71, glycine 97–leucine 117, leucine 133–phenylalanine 153, isoleucine 163–phenylalanine 183, serine 211–alanine 231, tryptophan 245–leucine 265, phenylalanine 283–isoleucine 303, valine 335–phenylalanine 355, alanine 364–alanine 384, phenylalanine 393–isoleucine 413, and leucine 416–threonine 436.

The protein belongs to the HAK/KUP transporter (TC 2.A.72) family.

It localises to the cell inner membrane. The enzyme catalyses K(+)(in) + H(+)(in) = K(+)(out) + H(+)(out). Functionally, transport of potassium into the cell. Likely operates as a K(+):H(+) symporter. The sequence is that of Probable potassium transport system protein Kup 2 from Legionella pneumophila (strain Lens).